The primary structure comprises 493 residues: Probable fatty acyl-CoA reductase 4 (493 aa).

The protein belongs to the fatty acyl-CoA reductase family. In terms of tissue distribution, expressed in the endodermal cell layer surrounding the central vasculature in roots. Expressed in the hilum region of seeds. Expressed in stamen filaments and receptacle of siliques.

The catalysed reaction is a long-chain fatty acyl-CoA + 2 NADPH + 2 H(+) = a long-chain primary fatty alcohol + 2 NADP(+) + CoA. Its function is as follows. Catalyzes the reduction of fatty acyl-CoA to fatty alcohols. Catalyzes specifically the formation of C18:0 and C20:0 fatty alcohols. Provides the fatty alcohols required for synthesis of suberin in roots, seed coat and wound-induced leaf tissue. Provides the fatty alcohols required for synthesis of alkyl hydroxycinnamates in root waxes. This is Probable fatty acyl-CoA reductase 4 from Arabidopsis thaliana (Mouse-ear cress).